The primary structure comprises 437 residues: Regulator of phospholipase D SRF1 (437 aa).

The tract at residues 1–24 is disordered; that stretch reads MGDSNSSQEAYSDTTSTNASRIAD. At 1-267 the chain is on the cytoplasmic side; that stretch reads MGDSNSSQEA…LTSLLLDNQY (267 aa). Ser45 and Ser167 each carry phosphoserine. A helical transmembrane segment spans residues 268–288; it reads LILGLRIFTGILSCISLALAI. Residues 289–308 are Extracellular-facing; it reads KIFQNSRSNNTISESKIGQQ. Asn297 carries an N-linked (GlcNAc...) asparagine glycan. The chain crosses the membrane as a helical span at residues 309–329; it reads PSTIMAICVNAVAIAYIIYIA. The Cytoplasmic segment spans residues 330 to 348; it reads HDEFAGKPVGLRNPLSKLK. The helical transmembrane segment at 349 to 369 threads the bilayer; it reads LILLDLLFIIFSSANLALAFN. Over 370 to 403 the chain is Extracellular; that stretch reads TRFDKEWVCTSIRRSNGSTYGYPKIPRICRKQEA. The N-linked (GlcNAc...) asparagine glycan is linked to Asn385. The helical transmembrane segment at 404–424 threads the bilayer; the sequence is LSAFLFVALFMWVITFSISIV. At 425–437 the chain is on the cytoplasmic side; it reads RVVEKVSSITNRN.

In terms of assembly, interacts with SPO14.

The protein localises to the membrane. Functionally, regulator of phospholipase D (SPO14) which is required for SPO14 catalytic activity in mitotic cells. Essential to buffer the toxic effects of C16:0 platelet activating factor. This chain is Regulator of phospholipase D SRF1 (SRF1), found in Saccharomyces cerevisiae (strain ATCC 204508 / S288c) (Baker's yeast).